Reading from the N-terminus, the 655-residue chain is p-hydroxybenzoic acid efflux pump subunit AaeB (655 aa).

Helical transmembrane passes span 13–33 (FAVK…HFQL), 38–58 (WAVL…GGEP), 67–89 (GFLR…IAMI), 93–112 (LLMI…ISSL), 121–141 (WGLA…EPLL), 152–172 (EIVI…PRSI), 370–390 (LFWL…IAVV), 407–427 (FIYG…VIIP), 431–451 (QSML…GIEV), 459–479 (MGAL…TFHF), and 482–502 (FLDS…VILL).

Belongs to the aromatic acid exporter ArAE (TC 2.A.85) family.

Its subcellular location is the cell inner membrane. Forms an efflux pump with AaeA. Could function as a metabolic relief valve, allowing to eliminate certain compounds when they accumulate to high levels in the cell. In Escherichia coli O9:H4 (strain HS), this protein is p-hydroxybenzoic acid efflux pump subunit AaeB.